We begin with the raw amino-acid sequence, 395 residues long: Tyrosine--tRNA ligase 2 (395 aa).

The 'HIGH' region signature appears at 42-51 (PTAPDIHLGH). The 'KMSKS' region signature appears at 226–230 (KMSKS). An ATP-binding site is contributed by lysine 229. The S4 RNA-binding domain occupies 334–394 (TPVANLLKDA…GKRKFARITI (61 aa)).

This sequence belongs to the class-I aminoacyl-tRNA synthetase family. TyrS type 2 subfamily. As to quaternary structure, homodimer.

It is found in the cytoplasm. The catalysed reaction is tRNA(Tyr) + L-tyrosine + ATP = L-tyrosyl-tRNA(Tyr) + AMP + diphosphate + H(+). Its function is as follows. Catalyzes the attachment of tyrosine to tRNA(Tyr) in a two-step reaction: tyrosine is first activated by ATP to form Tyr-AMP and then transferred to the acceptor end of tRNA(Tyr). The chain is Tyrosine--tRNA ligase 2 from Vibrio parahaemolyticus serotype O3:K6 (strain RIMD 2210633).